Reading from the N-terminus, the 189-residue chain is Photosystem I assembly protein Ycf4 (189 aa).

2 helical membrane-spanning segments follow: residues T31–F51 and V70–I90.

The protein belongs to the Ycf4 family.

The protein localises to the plastid. The protein resides in the chloroplast thylakoid membrane. In terms of biological role, seems to be required for the assembly of the photosystem I complex. This Chlorokybus atmophyticus (Soil alga) protein is Photosystem I assembly protein Ycf4.